A 383-amino-acid polypeptide reads, in one-letter code: Probable lipid transporter atnI (383 aa).

Helical transmembrane passes span 46-66 (VLFSVLFGLTTIIHIVQAIMF) and 71-91 (AWVVIMSSLWELIAFIMRSLF). Residue Asn94 is glycosylated (N-linked (GlcNAc...) asparagine). The next 5 helical transmembrane spans lie at 104–124 (FTIFFLLAPIWVNAFLYMTLG), 144–164 (FGHIFVWLEILAFIIQLVGAA), 182–202 (IYMGGIGVQELFILIFTGLFI), 231–251 (WLFYAIYASLFLITVRIIFRL), and 269–289 (WFEYVWDAAPIFICLAILNVA). Positions 305-383 (VSRKEKKQRK…YDNRGNEVRP (79 aa)) are disordered. The span at 307–316 (RKEKKQRKRE) shows a compositional bias: basic residues. Positions 317–329 (KKEAKIAEKEAKK) are enriched in basic and acidic residues.

This sequence belongs to the lipid-translocating exporter (LTE) (TC 9.A.26.1) family.

The protein resides in the membrane. It participates in secondary metabolite biosynthesis. Its function is as follows. Probable lipid transporter; part of the gene cluster that mediates the biosynthesis of aspercryptins, linear lipopeptides built from six amino acids including 2 highly unusual and nonproteogenic amino acids, 2-amino-octanoic acid (2aoa) and 2-amino-dodecanol (2adol). The core structure of aspercryptins is as follows: Ser/Ala-Thr-Ile/Val-2aoa-Asn-2adol. The first step of aspercryptin biosynthesis is the generation of the fatty acid precursors, octanoic and dodecanoic acids, by the FAS subunits atnF and atnM. The fatty acid precursors are likely transformed into the corresponding alpha-amino fatty acids in three steps. First, they are hydroxylated by the cytochrome P450 monooxygenase atnE, then oxidized to the corresponding alpha-keto acids by the NAD(P)-dependent oxidoreductase atnD, and finally converted to the alpha-amino fatty acids by the PLP-dependent aminotransferases atnH or atnJ. the alpha-amino fatty acids, 2-amino-octanoic and 2-amino-dodecanoic acids, are recognized, activated, and covalently tethered to the NRPS atnA by its fourth and sixth adenylation domains. The second module of atnA is the Thr module and contains an epimerase (E) domain responsible for the epimerization of Thr to D-allo-Thr. Additionally, despite atnA having only one epimerase domain, the first amino acid of aspercryptin A1 is D-Ser, suggesting that serine is either loaded directly as D-Ser on the first module or that the epimerase domain in the threonine module epimerizes both L-Ser and L-Thr. After condensation of the hexapeptide of aspercryptin, the C-terminal reductase (TE) domain might be involved in the reductive release and production of the aldehyde hexapeptide. Further reduction would generate aspercryptins. The variety of aspercryptins produced reflects the flexibility of the atnA NRPS, allowing incorporation of alanine instead of serine, valine for isoleucine, and a C10 fatty amino alcohol instead of the C12 version. AtnB seems to be involved in the selectivity for Ile versus Val by the third module. Moreover, type B, C and D aspercryptins have an additional N-terminal cichorine, acetyl and propionyl group respectively. The protein is Probable lipid transporter atnI of Emericella nidulans (strain FGSC A4 / ATCC 38163 / CBS 112.46 / NRRL 194 / M139) (Aspergillus nidulans).